The sequence spans 503 residues: uncharacterized protein (503 aa).

Residues 26-46 (ILFLLLGLIILVNISINVATA) form a helical membrane-spanning segment. 4 disordered regions span residues 155 to 176 (RPLSRGYPPFRKQPQGHKMSQM), 311 to 381 (YDAR…ESHE), 436 to 456 (QISDPTPPPTTFVPLSRNPGG), and 472 to 503 (VQENRGRASSLPPPSTSASRPSLHRSRTGKLN). 2 stretches are compositionally biased toward basic and acidic residues: residues 311–322 (YDARDQWRRGTE) and 334–346 (NPREVQGYRDHNS). The span at 348-367 (AHRQNFSSHTHSQPNHSPPQ) shows a compositional bias: polar residues. The span at 493 to 503 (SLHRSRTGKLN) shows a compositional bias: basic residues.

It is found in the membrane. This is an uncharacterized protein from Mus musculus (Mouse).